Consider the following 254-residue polypeptide: Mediator of RNA polymerase II transcription subunit 4 (254 aa).

Residues 72-114 (RVHQEMQSLEKEVEKRDSDIQQLQKQLKEAEHILATAVYQAKE) are a coiled coil. A disordered region spans residues 215-254 (ILPPHHGNDFGLEPPGHNKENEDDVEAMSTDSSSSSSDSD). Residues 243–254 (STDSSSSSSDSD) are compositionally biased toward low complexity.

It belongs to the Mediator complex subunit 4 family. In terms of assembly, component of the Mediator complex.

It is found in the nucleus. Functionally, component of the Mediator complex, a coactivator involved in the regulated transcription of nearly all RNA polymerase II-dependent genes. Mediator functions as a bridge to convey information from gene-specific regulatory proteins to the basal RNA polymerase II transcription machinery. Mediator is recruited to promoters by direct interactions with regulatory proteins and serves as a scaffold for the assembly of a functional preinitiation complex with RNA polymerase II and the general transcription factors. The sequence is that of Mediator of RNA polymerase II transcription subunit 4 (med4) from Danio rerio (Zebrafish).